A 252-amino-acid chain; its full sequence is Small ribosomal subunit protein uS2 (252 aa).

Belongs to the universal ribosomal protein uS2 family.

The polypeptide is Small ribosomal subunit protein uS2 (Ruminiclostridium cellulolyticum (strain ATCC 35319 / DSM 5812 / JCM 6584 / H10) (Clostridium cellulolyticum)).